Here is a 318-residue protein sequence, read N- to C-terminus: HPr kinase/phosphorylase (318 aa).

Residues His-143 and Lys-164 contribute to the active site. 158 to 165 (GKSGVGKS) contributes to the ATP binding site. Mg(2+) is bound at residue Ser-165. The active-site Proton acceptor; for phosphorylation activity. Proton donor; for dephosphorylation activity is Asp-182. An important for the catalytic mechanism of both phosphorylation and dephosphorylation region spans residues 206 to 215 (MEIRGLGILN). Residue Glu-207 coordinates Mg(2+). Residue Arg-248 is part of the active site. Residues 269–274 (PVKPGR) form an important for the catalytic mechanism of dephosphorylation region.

It belongs to the HPrK/P family. In terms of assembly, homohexamer. It depends on Mg(2+) as a cofactor.

It carries out the reaction [HPr protein]-L-serine + ATP = [HPr protein]-O-phospho-L-serine + ADP + H(+). It catalyses the reaction [HPr protein]-O-phospho-L-serine + phosphate + H(+) = [HPr protein]-L-serine + diphosphate. Catalyzes the ATP- as well as the pyrophosphate-dependent phosphorylation of a specific serine residue in HPr, a phosphocarrier protein of the phosphoenolpyruvate-dependent sugar phosphotransferase system (PTS). HprK/P also catalyzes the pyrophosphate-producing, inorganic phosphate-dependent dephosphorylation (phosphorolysis) of seryl-phosphorylated HPr (P-Ser-HPr). The chain is HPr kinase/phosphorylase from Leptospira borgpetersenii serovar Hardjo-bovis (strain JB197).